A 131-amino-acid chain; its full sequence is Small ribosomal subunit protein uS11 (131 aa).

It belongs to the universal ribosomal protein uS11 family. In terms of assembly, part of the 30S ribosomal subunit. Interacts with proteins S7 and S18. Binds to IF-3.

Functionally, located on the platform of the 30S subunit, it bridges several disparate RNA helices of the 16S rRNA. Forms part of the Shine-Dalgarno cleft in the 70S ribosome. This Helicobacter acinonychis (strain Sheeba) protein is Small ribosomal subunit protein uS11.